A 433-amino-acid polypeptide reads, in one-letter code: O-methyltransferase hasC (433 aa).

Residues E265 and 293 to 295 (GDF) each bind S-adenosyl-L-methionine. Residue H313 is the Proton acceptor of the active site. Residues 413-433 (SPRANGNGNSAGGLEWESELM) are disordered.

This sequence belongs to the class I-like SAM-binding methyltransferase superfamily. Cation-independent O-methyltransferase family. COMT subfamily.

It participates in secondary metabolite biosynthesis. In terms of biological role, O-methyltransferase; part of the gene cluster that mediates the biosynthesis of hexadehydro-astechrome (HAS), a tryptophan-derived iron(III)-complex that acts as a virulence factor in infected mice. Within the pathway, hasC, with the cytochrome P450 monooxygenase hasH and the FAD-linked oxidoreductase hasG, convert the hasE-prenylated Trp-Ala-dipeptide into an O-methylated diketopiperazine that is then released from the hasD NRPS. The HAS biosynthesis begins with the synthesis of a tethered Trp-Ala dipeptide by the NRPS hasD. The 7-dimethylallyltryptophan synthase hasE then catalyzes the prenylation of the hasD-tethered tryptophan or the resulting tethered Trp-Ala dipeptide at the C-7 position of the indole moiety. HAS biosynthesis continues via tethered intermediates with the succesive actions of the cytochrome P450 monooxygenase hasH, the O-methyltransferase hasC, and the FAD-linked oxidoreductase hasG. The resulting O-methylated diketopiperazine is then released from hasD. Finally, three O-methylated diketopiperazine molecules assemble in a trimeric complex with Fe(III) to produce hexadehydro-astechrome. This is O-methyltransferase hasC from Aspergillus fumigatus (strain CBS 144.89 / FGSC A1163 / CEA10) (Neosartorya fumigata).